We begin with the raw amino-acid sequence, 333 residues long: Biotin synthase (333 aa).

The 230-residue stretch at 47–276 (FFKNQMEFCS…KSEIRLCGGR (230 aa)) folds into the Radical SAM core domain. The [4Fe-4S] cluster site is built by Cys-65, Cys-69, and Cys-72. Residues Cys-109, Cys-141, Cys-201, and Arg-271 each contribute to the [2Fe-2S] cluster site.

The protein belongs to the radical SAM superfamily. Biotin synthase family. Homodimer. [4Fe-4S] cluster serves as cofactor. It depends on [2Fe-2S] cluster as a cofactor.

It catalyses the reaction (4R,5S)-dethiobiotin + (sulfur carrier)-SH + 2 reduced [2Fe-2S]-[ferredoxin] + 2 S-adenosyl-L-methionine = (sulfur carrier)-H + biotin + 2 5'-deoxyadenosine + 2 L-methionine + 2 oxidized [2Fe-2S]-[ferredoxin]. Its pathway is cofactor biosynthesis; biotin biosynthesis; biotin from 7,8-diaminononanoate: step 2/2. In terms of biological role, catalyzes the conversion of dethiobiotin (DTB) to biotin by the insertion of a sulfur atom into dethiobiotin via a radical-based mechanism. The polypeptide is Biotin synthase (Sulfurihydrogenibium sp. (strain YO3AOP1)).